Here is a 62-residue protein sequence, read N- to C-terminus: Photosystem II reaction center protein Z (62 aa).

2 helical membrane-spanning segments follow: residues 8-28 and 41-61; these read AVFALIATSSILLISVPVVFA and FSGTSLWITLVFLVGILNSLI.

It belongs to the PsbZ family. PSII is composed of 1 copy each of membrane proteins PsbA, PsbB, PsbC, PsbD, PsbE, PsbF, PsbH, PsbI, PsbJ, PsbK, PsbL, PsbM, PsbT, PsbY, PsbZ, Psb30/Ycf12, at least 3 peripheral proteins of the oxygen-evolving complex and a large number of cofactors. It forms dimeric complexes.

The protein localises to the plastid. It localises to the chloroplast thylakoid membrane. Its function is as follows. May control the interaction of photosystem II (PSII) cores with the light-harvesting antenna, regulates electron flow through the 2 photosystem reaction centers. PSII is a light-driven water plastoquinone oxidoreductase, using light energy to abstract electrons from H(2)O, generating a proton gradient subsequently used for ATP formation. The polypeptide is Photosystem II reaction center protein Z (Morus indica (Mulberry)).